Here is a 410-residue protein sequence, read N- to C-terminus: D-amino acid dehydrogenase (410 aa).

Residue 9–14 (GGGIVG) participates in FAD binding.

This sequence belongs to the DadA oxidoreductase family. FAD is required as a cofactor.

The protein localises to the cell inner membrane. It carries out the reaction a D-alpha-amino acid + a quinone + H2O = a 2-oxocarboxylate + a quinol + NH4(+). Functionally, catalyzes the oxidative deamination of D-amino acids. Has broad substrate specificity; is mostly active on D-proline, and to a lesser extent, on several other D-amino acids such as D-alanine, D-phenylalanine and D-serine. Mediates electron transport from D-proline to coenzyme Q1 in vitro, and is involved in the electron transport chain from D-proline to the c-type cytochrome in vivo. The protein is D-amino acid dehydrogenase of Helicobacter pylori (strain ATCC 700392 / 26695) (Campylobacter pylori).